Consider the following 533-residue polypeptide: Calcium/calmodulin-dependent protein kinase type II (533 aa).

Residues 18–26 (LGKGAFSVV) and K41 contribute to the ATP site. Residue D134 is the Proton acceptor of the active site. Phosphothreonine; by autocatalysis is present on T284. Polar residues-rich tracts occupy residues 316–345 (TSDS…QPTS) and 377–391 (PPST…SQTI). Disordered regions lie at residues 316–347 (TSDS…TSPA) and 369–400 (LLNK…EKAQ).

Belongs to the protein kinase superfamily. CAMK Ser/Thr protein kinase family. CaMK subfamily. Dodecamer. Subunits are tightly packed around a central ring-shaped scaffold with extensive contacts between the regulatory segment of one kinase and the catalytic domain of another enabling cooperative activation of a subunit by the adjacent molecule. Interacts with and phosphorylates daf-16; the interaction promotes daf-16 nuclear localization. Interacts with egl-2 and tir-1. Interacts with nsy-1. It depends on Mg(2+) as a cofactor.

The protein localises to the cytoplasm. It is found in the cell projection. The protein resides in the axon. It localises to the perikaryon. It catalyses the reaction L-seryl-[protein] + ATP = O-phospho-L-seryl-[protein] + ADP + H(+). It carries out the reaction L-threonyl-[protein] + ATP = O-phospho-L-threonyl-[protein] + ADP + H(+). Ca(2+)/calmodulin binding removes an autoinhibitory regulatory segment located C-terminal to the kinase domain. This releases the catalytic activity of the enzyme and makes accessible a regulatory residue Thr-284. Phosphorylation of Thr-284 by another kinase domain within the oligomeric holoenzyme keeps CaMKII active in the absence of Ca(2+)/calmodulin by preventing the rebinding of the regulatory segment to the kinase domain and by increasing the affinity of calmodulin for the enzyme. Can respond to high-frequency Ca(2+) pulses to become Ca(2+) independent. Functionally, role in locomotion and neuronal cell fate specification. Required for the regulation of synaptic density, egg laying, defecation, and meiotic maturation. Required for viability under chronic osmotic stress in which it acts downstream of osr-1. Regulates the synaptic trafficking of glr-1. Bidirectional modulator of neurotransmitter release with negative modulatory effects mainly mediated via slo-1 activation. May suppress the functional response to an internal pacemaker, perhaps by modulating the activity of the IP3 receptor. This chain is Calcium/calmodulin-dependent protein kinase type II, found in Caenorhabditis briggsae.